A 343-amino-acid chain; its full sequence is Glycerol-3-phosphate dehydrogenase [NAD(P)+] (343 aa).

NADPH is bound by residues Ser-22, Tyr-23, His-43, and Lys-117. Residues Lys-117, Gly-146, and Thr-148 each coordinate sn-glycerol 3-phosphate. Ala-150 provides a ligand contact to NADPH. The sn-glycerol 3-phosphate site is built by Lys-202, Asp-255, Ser-265, Arg-266, and Asn-267. Residue Lys-202 is the Proton acceptor of the active site. Arg-266 contributes to the NADPH binding site. Positions 290 and 292 each coordinate NADPH.

The protein belongs to the NAD-dependent glycerol-3-phosphate dehydrogenase family.

It localises to the cytoplasm. The enzyme catalyses sn-glycerol 3-phosphate + NAD(+) = dihydroxyacetone phosphate + NADH + H(+). The catalysed reaction is sn-glycerol 3-phosphate + NADP(+) = dihydroxyacetone phosphate + NADPH + H(+). The protein operates within membrane lipid metabolism; glycerophospholipid metabolism. Catalyzes the reduction of the glycolytic intermediate dihydroxyacetone phosphate (DHAP) to sn-glycerol 3-phosphate (G3P), the key precursor for phospholipid synthesis. The sequence is that of Glycerol-3-phosphate dehydrogenase [NAD(P)+] from Aliivibrio fischeri (strain ATCC 700601 / ES114) (Vibrio fischeri).